Consider the following 222-residue polypeptide: Protein-L-isoaspartate O-methyltransferase (222 aa).

Ser72 is an active-site residue.

It belongs to the methyltransferase superfamily. L-isoaspartyl/D-aspartyl protein methyltransferase family.

The protein resides in the cytoplasm. The catalysed reaction is [protein]-L-isoaspartate + S-adenosyl-L-methionine = [protein]-L-isoaspartate alpha-methyl ester + S-adenosyl-L-homocysteine. Catalyzes the methyl esterification of L-isoaspartyl residues in peptides and proteins that result from spontaneous decomposition of normal L-aspartyl and L-asparaginyl residues. It plays a role in the repair and/or degradation of damaged proteins. The chain is Protein-L-isoaspartate O-methyltransferase from Picosynechococcus sp. (strain ATCC 27264 / PCC 7002 / PR-6) (Agmenellum quadruplicatum).